Reading from the N-terminus, the 536-residue chain is Coilin (536 aa).

The segment at 96-316 is disordered; the sequence is AETCNDGAQN…QHSQSPTSDS (221 aa). A compositionally biased stretch (basic residues) spans 171 to 180; that stretch reads KTHKGKRTKK. The segment covering 181-192 has biased composition (basic and acidic residues); sequence KSEAPIENPPDK. Positions 213–238 are enriched in low complexity; sequence QTSSSDSSDTSSCSDQPTPTTQQKPQ. Polar residues-rich tracts occupy residues 239–257 and 303–316; these read SSAK…THSV and THIQ…TSDS. Repeat copies occupy residues 353 to 358 and 380 to 385. The segment at 353 to 385 is 2 X 6 AA repeats of R-G-R-G-R-G; the sequence is RGRGRGEDFSWRGQRGRWFRGQGNNSNRGRGRG. The interval 368–387 is disordered; that stretch reads GRWFRGQGNNSNRGRGRGDS. A compositionally biased stretch (low complexity) spans 371 to 380; it reads FRGQGNNSNR. The 99-residue stretch at 425–523 folds into the Tudor; atypical domain; the sequence is DYSSLPLLAA…VMLNWNTLIE (99 aa).

The protein belongs to the coilin family. Expressed in both oocytes and somatic cells.

The protein resides in the nucleus. This Xenopus laevis (African clawed frog) protein is Coilin (coil).